A 376-amino-acid polypeptide reads, in one-letter code: DNA polymerase IV (376 aa).

In terms of domain architecture, UmuC spans 6–187; the sequence is IIHIDMDAFF…LSIGKFYGVG (182 aa). Mg(2+) contacts are provided by Asp10 and Asp105. The active site involves Glu106.

It belongs to the DNA polymerase type-Y family. As to quaternary structure, monomer. The cofactor is Mg(2+).

The protein localises to the cytoplasm. It carries out the reaction DNA(n) + a 2'-deoxyribonucleoside 5'-triphosphate = DNA(n+1) + diphosphate. Poorly processive, error-prone DNA polymerase involved in untargeted mutagenesis. Copies undamaged DNA at stalled replication forks, which arise in vivo from mismatched or misaligned primer ends. These misaligned primers can be extended by PolIV. Exhibits no 3'-5' exonuclease (proofreading) activity. May be involved in translesional synthesis, in conjunction with the beta clamp from PolIII. This is DNA polymerase IV from Desulfotalea psychrophila (strain LSv54 / DSM 12343).